A 251-amino-acid polypeptide reads, in one-letter code: tRNA (guanine-N(1)-)-methyltransferase (251 aa).

Residues Gly117 and 137 to 142 (IGDYVL) each bind S-adenosyl-L-methionine.

It belongs to the RNA methyltransferase TrmD family. As to quaternary structure, homodimer.

It localises to the cytoplasm. The catalysed reaction is guanosine(37) in tRNA + S-adenosyl-L-methionine = N(1)-methylguanosine(37) in tRNA + S-adenosyl-L-homocysteine + H(+). Its function is as follows. Specifically methylates guanosine-37 in various tRNAs. The chain is tRNA (guanine-N(1)-)-methyltransferase from Actinobacillus pleuropneumoniae serotype 5b (strain L20).